The sequence spans 818 residues: Probable helicase MAGATAMA 3 (818 aa).

Residues 259–559 (NKSQKEAIDV…KMLKTQYRMH (301 aa)) enclose the UvrD-like helicase ATP-binding domain. 280–287 (GPPGTGKT) contributes to the ATP binding site. 2 stretches are compositionally biased toward acidic residues: residues 781-790 (PDAPLYEDES) and 798-818 (GDDD…AGED). The segment at 781-818 (PDAPLYEDESLPVAPYGGDDDFGDGDADQDDVAMAGED) is disordered.

It belongs to the helicase family. As to expression, expressed in flowers, siliques, leaves, roots and shoot apex.

It is found in the nucleus. Its function is as follows. Probable helicase that may regulate RNA molecules involved in nucleolar organization and pollen tube guidance. The chain is Probable helicase MAGATAMA 3 (MAA3) from Arabidopsis thaliana (Mouse-ear cress).